The following is a 597-amino-acid chain: mRNA-capping enzyme (597 aa).

The segment at 1 to 212 is TPase; that stretch reads MAYNKIPPRW…DEDGKKDSEP (212 aa). Residues 25-183 enclose the Tyrosine-protein phosphatase domain; sequence LPLKTMLGPR…FRRYGDIEEA (159 aa). Cysteine 126 functions as the Phosphocysteine intermediate in the catalytic mechanism. Residues 181–221 form a disordered region; that stretch reads EEAPPPPVLPDWCFEDEDEEDEDEDGKKDSEPGSSASFSKR. Residues 193–204 are compositionally biased toward acidic residues; it reads CFEDEDEEDEDE. Positions 229–597 are GTase; the sequence is GAIFLEGITV…PPPKRLHRPT (369 aa). Lysine 294 serves as the catalytic N6-GMP-lysine intermediate. GTP is bound by residues arginine 299, arginine 315, 343-345, 458-460, and 528-533; these read DGE, KWK, and RQRIDK. The interval 330–386 is interaction with POLR2A; the sequence is RKDLRMHLSNTLLDGEMIIDKVNGQAVPRYLIYDIIKFNAQPVGDCDFNIRLQCIER. Positions 573-597 are disordered; it reads KRKYPLDPDTELMPPPPPKRLHRPT.

The protein in the N-terminal section; belongs to the non-receptor class of the protein-tyrosine phosphatase family. This sequence in the C-terminal section; belongs to the eukaryotic GTase family. Interacts with SUPT5H and RNMT. Interacts with POLR2A (via C-terminus); this enhances guanylyltransferase activity. Binds (via GTase domain) to the elongating phosphorylated form of RNA polymerase II; can form direct interactions with the phosphorylated POLR2A C-terminal domain and indirect interactions via bound RNA.

Its subcellular location is the nucleus. The enzyme catalyses a 5'-end triphospho-ribonucleoside in mRNA + H2O = a 5'-end diphospho-ribonucleoside in mRNA + phosphate + H(+). It carries out the reaction a 5'-end diphospho-ribonucleoside in mRNA + GTP + H(+) = a 5'-end (5'-triphosphoguanosine)-ribonucleoside in mRNA + diphosphate. Its activity is regulated as follows. RNA triphosphatase activity is inhibited by vanadate, iodoacetate and magnesium. Functionally, bifunctional mRNA-capping enzyme exhibiting RNA 5'-triphosphate monophosphatase activity in the N-terminal part and mRNA guanylyltransferase activity in the C-terminal part. Catalyzes the first two steps of cap formation: by removing the gamma-phosphate from the 5'-triphosphate end of nascent mRNA to yield a diphosphate end, and by transferring the GMP moiety of GTP to the 5'-diphosphate terminus of RNA via a covalent enzyme-GMP reaction intermediate. The sequence is that of mRNA-capping enzyme (Rngtt) from Mus musculus (Mouse).